A 142-amino-acid polypeptide reads, in one-letter code: SsrA-binding protein (142 aa).

Belongs to the SmpB family.

It localises to the cytoplasm. Required for rescue of stalled ribosomes mediated by trans-translation. Binds to transfer-messenger RNA (tmRNA), required for stable association of tmRNA with ribosomes. tmRNA and SmpB together mimic tRNA shape, replacing the anticodon stem-loop with SmpB. tmRNA is encoded by the ssrA gene; the 2 termini fold to resemble tRNA(Ala) and it encodes a 'tag peptide', a short internal open reading frame. During trans-translation Ala-aminoacylated tmRNA acts like a tRNA, entering the A-site of stalled ribosomes, displacing the stalled mRNA. The ribosome then switches to translate the ORF on the tmRNA; the nascent peptide is terminated with the 'tag peptide' encoded by the tmRNA and targeted for degradation. The ribosome is freed to recommence translation, which seems to be the essential function of trans-translation. This Mycoplasma mobile (strain ATCC 43663 / 163K / NCTC 11711) (Mesomycoplasma mobile) protein is SsrA-binding protein.